The following is a 358-amino-acid chain: tRNA(Ile)-lysidine synthase (358 aa).

Position 35-40 (35-40) interacts with ATP; that stretch reads SGGPDS.

Belongs to the tRNA(Ile)-lysidine synthase family.

It localises to the cytoplasm. The catalysed reaction is cytidine(34) in tRNA(Ile2) + L-lysine + ATP = lysidine(34) in tRNA(Ile2) + AMP + diphosphate + H(+). In terms of biological role, ligates lysine onto the cytidine present at position 34 of the AUA codon-specific tRNA(Ile) that contains the anticodon CAU, in an ATP-dependent manner. Cytidine is converted to lysidine, thus changing the amino acid specificity of the tRNA from methionine to isoleucine. The polypeptide is tRNA(Ile)-lysidine synthase (Bradyrhizobium sp. (strain BTAi1 / ATCC BAA-1182)).